The sequence spans 972 residues: FHF complex subunit HOOK-interacting protein 1B (972 aa).

4 disordered regions span residues 465 to 496, 510 to 547, 573 to 642, and 710 to 733; these read APSPPRPEHASWARGPGSPSVDSSSVMTVPRP, SLSGSESPGPAPCSPGLSASPASSPGRRPTPAEEAGEL, SAPY…PGSW, and SFTCPPEPPGPFLNSPLRTPNQLP. S467 is modified (phosphoserine). Residues 479-490 are compositionally biased toward low complexity; it reads GPGSPSVDSSSV. Phosphoserine occurs at positions 510, 523, 529, and 533. Low complexity predominate over residues 523–535; that stretch reads SPGLSASPASSPG. Positions 618-627 are enriched in gly residues; that stretch reads GLAGGAGEGP. A phosphoserine mark is found at S859 and S897.

It belongs to the FHIP family. In terms of assembly, component of the FTS/Hook/FHIP complex (FHF complex), composed of AKTIP/FTS, FHIP1B, and one or more members of the Hook family of proteins HOOK1, HOOK2, and HOOK3. The FHF complex associates with the homotypic vesicular sorting complex (the HOPS complex).

Component of the FTS/Hook/FHIP complex (FHF complex). The FHF complex may function to promote vesicle trafficking and/or fusion via the homotypic vesicular protein sorting complex (the HOPS complex). FHF complex promotes the distribution of AP-4 complex to the perinuclear area of the cell. The protein is FHF complex subunit HOOK-interacting protein 1B (FHIP1B) of Pongo abelii (Sumatran orangutan).